Here is a 504-residue protein sequence, read N- to C-terminus: Paired zinc finger protein 1 (504 aa).

2 consecutive C2H2-type zinc fingers follow at residues 12–35 and 39–62; these read LLCG…RQRH and HMCL…KNKH. The C2H2-type 3; degenerate zinc-finger motif lies at 68 to 91; the sequence is FICVCCNWSFGTEIYLKCHEECMK. 2 disordered regions span residues 115–136 and 154–173; these read ALNT…SPVP and IESA…LVSG. Over residues 159–172 the composition is skewed to polar residues; it reads RSSASTSTPRTLVS. C2H2-type zinc fingers lie at residues 179-202 and 206-229; these read IPCG…RRFH and HTCL…KSQH. Residues 235–258 form a C2H2-type 6; degenerate zinc finger; sequence YNCLCCNWTFLNQVHLISHKTCLK. The segment at 309–332 adopts a C2H2-type 7 zinc-finger fold; sequence LSCKSCGKFFYSERSLSKHHRQIH. A C2H2-type 8; degenerate zinc finger spans residues 365–389; it reads FNCRCCNWSFATRRCLMSHVECLKK.

In terms of tissue distribution, expressed in proximal gonad.

Possible transcriptional regulator. Involved in promoting segregation of chromosomes during meiosis, perhaps acting downstream of the let-60 RAS / mpk-1 MAPK signaling pathway. This is Paired zinc finger protein 1 from Caenorhabditis elegans.